The sequence spans 417 residues: MQQVITQTLVDDRFIQISDSKKSEGLATDSTKRQSQEQPIHDKDPIKAATAAMATTPLVKEHQDTWYYPPDIANDLQSINLPAELKGEIFACAWEYTRCVIPNYTNWNRYVAFMRIIIMGIIAEFRGEMVDVTASNNLLGYDLDATLAALFEGTPGHKEMAREYKTFLLITADKASERRDGELFRRYVNALAQSPRHWFRMRDCDALARFTIASALACNDLDDIWFTEDQFEILTEIGDTLYDAVAFYKHRAEGETNSTFAYMPEDLRIKAYSECREILWALDAAWARNPKLANVINFVRFFGGPIHMMMRRYRFVEENLTIGKSETDKVVDQTRKNFKLWNRVDANKRSVLNTQRYKALIARSEELMFPGLAEFLEMGGDGICDKCKYRESTVQNCHTSLVVLNYAANADYRGEST.

The protein belongs to the alpha-ionylideneethane synthase family.

It functions in the pathway hormone biosynthesis. Alpha-ionylideneethane synthase; part of the gene cluster that mediates the biosynthesis of abscisic acid (ABA), a phytohormone that acts antagonistically toward salicylic acid (SA), jasmonic acid (JA) and ethylene (ETH) signaling, to impede plant defense responses. The first step of the pathway catalyzes the reaction from farnesyl diphosphate to alpha-ionylideneethane performed by the alpha-ionylideneethane synthase aba3 via a three-step reaction mechanism involving 2 neutral intermediates, beta-farnesene and allofarnesene. The cytochrome P450 monooxygenase aba1 might then be involved in the conversion of alpha-ionylideneethane to alpha-ionylideneacetic acid. Alpha-ionylideneacetic acid is further converted to abscisic acid in 2 steps involving the cytochrome P450 monooxygenase aba2 and the short-chain dehydrogenase/reductase aba4, via the intermediates 1'-deoxy-ABA or 1',4'-trans-diol-ABA, depending on the order of action of these 2 enzymes. Aba2 is responsible for the hydroxylation of carbon atom C-1' and aba4 might be involved in the oxidation of the C-4' carbon atom. The sequence is that of Alpha-ionylideneethane synthase aba3 from Botryotinia fuckeliana (Noble rot fungus).